The chain runs to 152 residues: Glutamyl-tRNA(Gln) amidotransferase subunit F, mitochondrial (152 aa).

Belongs to the GatF family. Subunit of the heterotrimeric GatFAB amidotransferase (AdT) complex, composed of A, B and F subunits.

It is found in the mitochondrion inner membrane. The enzyme catalyses L-glutamyl-tRNA(Gln) + L-glutamine + ATP + H2O = L-glutaminyl-tRNA(Gln) + L-glutamate + ADP + phosphate + H(+). Its function is as follows. Allows the formation of correctly charged Gln-tRNA(Gln) through the transamidation of misacylated Glu-tRNA(Gln) in the mitochondria. The reaction takes place in the presence of glutamine and ATP through an activated gamma-phospho-Glu-tRNA(Gln). Required for proper protein synthesis within the mitochondrion. This is Glutamyl-tRNA(Gln) amidotransferase subunit F, mitochondrial from Komagataella phaffii (strain GS115 / ATCC 20864) (Yeast).